Reading from the N-terminus, the 1464-residue chain is Sister chromatid cohesion protein PDS5 homolog B-B (1464 aa).

An HEAT repeat occupies 383–419 (LLVNDQLLNFVRERTLDKRWRVRKEAMMGLAQIYKKY). The tract at residues 1126–1464 (KSTNVLGAVN…MKSELEGPLL (339 aa)) is disordered. Positions 1137–1155 (PLSSAGKQMQSKSSRMETV) are enriched in polar residues. Over residues 1156–1168 (SNASSGSNPSSPG) the composition is skewed to low complexity. The segment covering 1177 to 1186 (TELDQIEYED) has biased composition (acidic residues). Basic and acidic residues-rich tracts occupy residues 1197-1215 (KKSDKRDDSDLLKSEVEKP), 1234-1244 (ELSKPAQEPKS), and 1265-1274 (WQEKRLKEDL). Basic residues predominate over residues 1286–1295 (KKGRRGRPPK). The a.T hook 1 DNA-binding region spans 1287 to 1299 (KGRRGRPPKSAKM). Positions 1325–1342 (PTDEEDHLEISEEQDSEN) are enriched in acidic residues. Positions 1347–1357 (RKGRGSSKKTP) are enriched in basic residues. The span at 1359 to 1373 (KSDSTDSALDTSRPT) shows a compositional bias: polar residues. DNA-binding regions (a.T hook) lie at residues 1375 to 1387 (QKRRGRPPKTPTV) and 1391 to 1403 (KSHVGRPRKVVSK). Residues 1390-1400 (KKSHVGRPRKV) are compositionally biased toward basic residues. Acidic residues predominate over residues 1425–1435 (SNEEETADEEV). Residues 1441-1453 (GRRRTAKKRRWIQ) show a composition bias toward basic residues. The span at 1455 to 1464 (MKSELEGPLL) shows a compositional bias: basic and acidic residues.

The protein belongs to the PDS5 family. Interacts with the cohesin complex. Post-translationally, phosphorylated in mitotic cells.

It localises to the nucleus. Functionally, plays a role in androgen-induced proliferative arrest. Required for maintenance of sister chromatid cohesion during mitosis. This Xenopus laevis (African clawed frog) protein is Sister chromatid cohesion protein PDS5 homolog B-B (pds5b-b).